Here is a 314-residue protein sequence, read N- to C-terminus: tRNA dimethylallyltransferase (314 aa).

ATP is bound at residue 12-19 (GPTASGKT). 14–19 (TASGKT) lines the substrate pocket. 2 interaction with substrate tRNA regions span residues 37–40 (DSAQ) and 161–165 (QRIQR).

It belongs to the IPP transferase family. In terms of assembly, monomer. Mg(2+) is required as a cofactor.

It carries out the reaction adenosine(37) in tRNA + dimethylallyl diphosphate = N(6)-dimethylallyladenosine(37) in tRNA + diphosphate. Catalyzes the transfer of a dimethylallyl group onto the adenine at position 37 in tRNAs that read codons beginning with uridine, leading to the formation of N6-(dimethylallyl)adenosine (i(6)A). The chain is tRNA dimethylallyltransferase from Nitrosococcus oceani (strain ATCC 19707 / BCRC 17464 / JCM 30415 / NCIMB 11848 / C-107).